We begin with the raw amino-acid sequence, 453 residues long: Folate transporter 1 (453 aa).

The N-linked (GlcNAc...) asparagine glycan is linked to Asn36. 5 consecutive transmembrane segments (helical) span residues 48–68 (PYWTYSYMLALIPMFILTDIL), 73–93 (IVMIEAIGLVATWALLVFGKG), 102–122 (VSFGVASAAEIAYYSYIYSIV), 136–156 (AAALMGKLVAFGLGQTLISTH), and 161–181 (LVLNQISLGAVCLVTIIAIFL). An N-linked (GlcNAc...) asparagine glycan is attached at Asn260. 5 consecutive transmembrane segments (helical) span residues 276–296 (VANGVVEFVNTALGAFLSLFI), 306–326 (HGQMILFITSAIVAVLLYLCS), 331–351 (VLVAYSSYVVITSIYHMLITA), 368–388 (IFGCNTFVAVCLQSLLTLVVV), and 401–421 (FVIYSGYFALVASIFAFFFMI).

The protein belongs to the reduced folate carrier (RFC) transporter (TC 2.A.48) family. As to expression, highly expressed in pharynx and posterior part of the intestine. Expressed at lower levels in the body wall muscles, head muscles, and vulva muscles. Highly expressed in the intestine of the early larva, levels decrease in the later stages of development.

The protein resides in the membrane. Its function is as follows. Folate transporter. The sequence is that of Folate transporter 1 (folt-1) from Caenorhabditis elegans.